Consider the following 411-residue polypeptide: Serine hydroxymethyltransferase (411 aa).

(6S)-5,6,7,8-tetrahydrofolate is bound by residues leucine 119 and 123–125 (GHL). The residue at position 228 (lysine 228) is an N6-(pyridoxal phosphate)lysine. 351-353 (SPF) is a (6S)-5,6,7,8-tetrahydrofolate binding site.

It belongs to the SHMT family. Homodimer. Pyridoxal 5'-phosphate is required as a cofactor.

The protein localises to the cytoplasm. The enzyme catalyses (6R)-5,10-methylene-5,6,7,8-tetrahydrofolate + glycine + H2O = (6S)-5,6,7,8-tetrahydrofolate + L-serine. Its pathway is one-carbon metabolism; tetrahydrofolate interconversion. The protein operates within amino-acid biosynthesis; glycine biosynthesis; glycine from L-serine: step 1/1. Its function is as follows. Catalyzes the reversible interconversion of serine and glycine with tetrahydrofolate (THF) serving as the one-carbon carrier. This reaction serves as the major source of one-carbon groups required for the biosynthesis of purines, thymidylate, methionine, and other important biomolecules. Also exhibits THF-independent aldolase activity toward beta-hydroxyamino acids, producing glycine and aldehydes, via a retro-aldol mechanism. In Clostridium botulinum (strain Alaska E43 / Type E3), this protein is Serine hydroxymethyltransferase.